Reading from the N-terminus, the 156-residue chain is Hemerythrin-like protein (156 aa).

His54, His84, Glu88, His109, His113, His142, and Asp147 together coordinate Fe cation.

The protein belongs to the hemerythrin family.

In terms of biological role, oxygen-binding protein. The oxygen-binding site contains two iron atoms. The polypeptide is Hemerythrin-like protein (Nematostella vectensis (Starlet sea anemone)).